A 211-amino-acid chain; its full sequence is MKGILGTKIGMTQIWKNDRAIPVTVVLAGPCPIVQRKTAQTDGYEAVQIGYAPKAERKVNKPMQGHFAKAGVAPTRILREFRGFAPDGDSVNVDIFAEGEKIDATGTSKGKGTQGVMKRWNFAGGPASHGSKKWHRRPGSIGQRKTPGRVYKGKRMAGHMGMERVTVQNLEVVEIRAGENLILVKGAIPGANGGLVVLRSAAKASAAKGGK.

The tract at residues 125-148 (GPASHGSKKWHRRPGSIGQRKTPG) is disordered.

The protein belongs to the universal ribosomal protein uL3 family. In terms of assembly, part of the 50S ribosomal subunit. Forms a cluster with proteins L14 and L19. Also contacts proteins L13 and L17.

Its function is as follows. One of the primary rRNA binding proteins, it binds directly near the 3'-end of the 23S rRNA, where it nucleates assembly of the 50S subunit. The polypeptide is Large ribosomal subunit protein uL3 (rplC) (Deinococcus radiodurans (strain ATCC 13939 / DSM 20539 / JCM 16871 / CCUG 27074 / LMG 4051 / NBRC 15346 / NCIMB 9279 / VKM B-1422 / R1)).